The following is a 396-amino-acid chain: MAKLDFDRSKEHVNIGTIGHVDHGKTTLTAAIATVLAKKGLSEAKSYDAIDNAPEEKARGITINTSHIEYNTEKRHYAHVDCPGHADYIKNMITGAAQMDGSILVVAATDGAMPQTKEHVLLAKQVGVPKMVVFLNKCDMIKPEDAEMIDLVEMEVRELLTKYGFDGDNTPFVRGSALQALQGKPEYEENILELMNAVDTWIETPVKDFEKPFLMAVEDVFTISGRGTVATGRVERGRLSLNEEVEIVGLKPTKKTVVTGIEMFRKNLKEAQAGDNAGLLLRGVERSAIERGQVLAKPGSIVPHAEFEAAIYALTKEEGGRHTPFFVNYKPQFYFRTTDVTGGLEFEKGREFVQPGENVNLKVKLIAPIAVEEGTKFSIREGGRTVGYGSVTKILK.

The tr-type G domain occupies 10–206; it reads KEHVNIGTIG…AVDTWIETPV (197 aa). The interval 19-26 is G1; that stretch reads GHVDHGKT. 19–26 is a GTP binding site; sequence GHVDHGKT. T26 contributes to the Mg(2+) binding site. Residues 60 to 64 form a G2 region; it reads GITIN. Residues 81–84 form a G3 region; that stretch reads DCPG. GTP is bound by residues 81 to 85 and 136 to 139; these read DCPGH and NKCD. Residues 136 to 139 form a G4 region; that stretch reads NKCD. Residues 176–178 form a G5 region; sequence SAL.

The protein belongs to the TRAFAC class translation factor GTPase superfamily. Classic translation factor GTPase family. EF-Tu/EF-1A subfamily. As to quaternary structure, monomer.

The protein resides in the cytoplasm. It carries out the reaction GTP + H2O = GDP + phosphate + H(+). Its function is as follows. GTP hydrolase that promotes the GTP-dependent binding of aminoacyl-tRNA to the A-site of ribosomes during protein biosynthesis. The chain is Elongation factor Tu from Mycoplasmopsis agalactiae (strain NCTC 10123 / CIP 59.7 / PG2) (Mycoplasma agalactiae).